Consider the following 711-residue polypeptide: Serine/threonine-protein kinase ATG1b (711 aa).

Residues tyrosine 20–leucine 277 form the Protein kinase domain. Residues isoleucine 26–valine 34 and lysine 49 contribute to the ATP site. The Proton acceptor role is filled by aspartate 142. Disordered regions lie at residues leucine 318 to methionine 342 and phenylalanine 383 to glutamine 419. Over residues phenylalanine 383–glutamine 393 the composition is skewed to basic and acidic residues. Residues phenylalanine 394–arginine 410 show a composition bias toward polar residues. The AIM (Atg8-family-interacting motif) motif lies at tyrosine 421–isoleucine 424.

The protein belongs to the protein kinase superfamily. Ser/Thr protein kinase family.

The protein resides in the cytoplasmic vesicle. The protein localises to the autophagosome. In terms of biological role, serine/threonine protein kinase involved in autophagy. The ATG1-ATG13 protein kinase complex regulates downstream events required for autophagosome enclosure and/or vacuolar delivery. This is Serine/threonine-protein kinase ATG1b from Arabidopsis thaliana (Mouse-ear cress).